A 205-amino-acid chain; its full sequence is GTP cyclohydrolase-2 (205 aa).

49–53 (RIHSE) serves as a coordination point for GTP. Residues cysteine 54, cysteine 65, and cysteine 67 each coordinate Zn(2+). GTP is bound by residues glutamine 70, 92 to 94 (EGR), and threonine 114. Aspartate 126 serves as the catalytic Proton acceptor. Residue arginine 128 is the Nucleophile of the active site. GTP contacts are provided by threonine 149 and lysine 154.

The protein belongs to the GTP cyclohydrolase II family. Zn(2+) serves as cofactor.

It carries out the reaction GTP + 4 H2O = 2,5-diamino-6-hydroxy-4-(5-phosphoribosylamino)-pyrimidine + formate + 2 phosphate + 3 H(+). It participates in cofactor biosynthesis; riboflavin biosynthesis; 5-amino-6-(D-ribitylamino)uracil from GTP: step 1/4. Functionally, catalyzes the conversion of GTP to 2,5-diamino-6-ribosylamino-4(3H)-pyrimidinone 5'-phosphate (DARP), formate and pyrophosphate. This is GTP cyclohydrolase-2 from Shewanella sediminis (strain HAW-EB3).